The sequence spans 375 residues: tRNA-specific 2-thiouridylase MnmA (375 aa).

Residues G8–S15 and M34 each bind ATP. The interaction with target base in tRNA stretch occupies residues N104–D106. C109 acts as the Nucleophile in catalysis. The cysteines at positions 109 and 208 are disulfide-linked. G134 contacts ATP. Residues K158–Q160 form an interaction with tRNA region. Catalysis depends on C208, which acts as the Cysteine persulfide intermediate. Residues R321–Y322 are interaction with tRNA.

This sequence belongs to the MnmA/TRMU family.

Its subcellular location is the cytoplasm. It catalyses the reaction S-sulfanyl-L-cysteinyl-[protein] + uridine(34) in tRNA + AH2 + ATP = 2-thiouridine(34) in tRNA + L-cysteinyl-[protein] + A + AMP + diphosphate + H(+). In terms of biological role, catalyzes the 2-thiolation of uridine at the wobble position (U34) of tRNA, leading to the formation of s(2)U34. The polypeptide is tRNA-specific 2-thiouridylase MnmA (Mycoplasma capricolum subsp. capricolum (strain California kid / ATCC 27343 / NCTC 10154)).